The chain runs to 192 residues: MDTSRLTLNHFLSRFQLLRPQMTHETLNQRQAAVLIPVVRRPQPGLLLTQRAIHLRKHAGQVAFPGGAVDSTDASLIAAALREAQEEVAIPPQAVEVIGVLPPVDSVTGFQVTPVVGIIPPNLPWRASEDEVSAVFEMPLAQALQLGRYHPLDVYRRGNSHRVWLSWYEHYFVWGMTANILRELALQIGVKP.

One can recognise a Nudix hydrolase domain in the interval 29 to 160; the sequence is QRQAAVLIPV…PLDVYRRGNS (132 aa). The short motif at 67–89 is the Nudix box element; sequence GAVDSTDASLIAAALREAQEEVA. Mg(2+) is bound by residues Glu-83 and Glu-87.

It belongs to the Nudix hydrolase family. PCD1 subfamily. It depends on Mn(2+) as a cofactor. Mg(2+) is required as a cofactor.

Functionally, probably mediates the hydrolysis of some nucleoside diphosphate derivatives. This is an uncharacterized protein from Salmonella newport (strain SL254).